A 274-amino-acid chain; its full sequence is Bis(5'-nucleosyl)-tetraphosphatase, symmetrical (274 aa).

The protein belongs to the Ap4A hydrolase family.

The catalysed reaction is P(1),P(4)-bis(5'-adenosyl) tetraphosphate + H2O = 2 ADP + 2 H(+). Functionally, hydrolyzes diadenosine 5',5'''-P1,P4-tetraphosphate to yield ADP. This Shewanella loihica (strain ATCC BAA-1088 / PV-4) protein is Bis(5'-nucleosyl)-tetraphosphatase, symmetrical.